The primary structure comprises 81 residues: Arminin 2a (81 aa).

Residues 1–18 (MKTVFAILFLAFIALTYA) form the signal peptide. Residues 19–57 (RSYEDVKEEIKNEVVKEILEDLEEESDELDDKSKEINDA) constitute a propeptide that is removed on maturation. Ala-78 is modified (alanine amide).

Belongs to the arminin family. Expressed in entodermal epithelium along the body column.

Its subcellular location is the secreted. It is found in the target cell membrane. Antimicrobial peptide with a broad-spectrum antimicrobial activity. Keeps its antibacterial activity under a wide range of salt concentrations that mimic physiological conditions of human blood, which is surprising, since Hydra is an obligate freshwater animal with nearly no salt tolerance. Does not affect red blood cells. The protein is Arminin 2a of Hydra vulgaris (Hydra).